The chain runs to 310 residues: MSSKPDILTIDPLVPVMKERLEKSFTLHPYTSLENLKNIAPAIRGITTGGGSGVPSEIMDALPNLEVISVNGVGTDRINLDEARRRNIGVAITQNTLTDDVADMAVALMMAVMRSIVTNDAFVRAGKWPSATAPLGRSLTRKKVGIAGFGHIGQAIAKRVSAFGMEVAYFNSHARPESTCHFEPDLKALATWCDVLILAVSGGPRSANMIDRDTLDALGKDGFLVNIARGTVVDEAALLSALQEKRIAGAGLDVFQNEPNINPAFLSLPNTVLQAHQASATVETRTTMANLVVDNLIAYFTDKTLLTPVI.

NADP(+) contacts are provided by residues 151–152 (HI) and 227–229 (IAR). Residues Arg-229 and Glu-258 contribute to the active site. Catalysis depends on His-276, which acts as the Proton donor.

Belongs to the D-isomer specific 2-hydroxyacid dehydrogenase family. Homohexamer.

The catalysed reaction is D-gluconate + NADP(+) = 2-dehydro-D-gluconate + NADPH + H(+). Functionally, catalyzes the reduction of 2-keto-D-gluconate to gluconate. Can also catalyze the reduction of 2-keto-L-gulonate. Can use both NADH and NADPH efficiently, with a slight preference for NADPH. This is 2-ketogluconate reductase from Gluconobacter oxydans (strain 621H) (Gluconobacter suboxydans).